A 433-amino-acid chain; its full sequence is Glutamate-1-semialdehyde 2,1-aminomutase (433 aa).

The residue at position 273 (lysine 273) is an N6-(pyridoxal phosphate)lysine.

Belongs to the class-III pyridoxal-phosphate-dependent aminotransferase family. HemL subfamily. In terms of assembly, homodimer. Requires pyridoxal 5'-phosphate as cofactor.

The protein resides in the cytoplasm. The catalysed reaction is (S)-4-amino-5-oxopentanoate = 5-aminolevulinate. It participates in porphyrin-containing compound metabolism; protoporphyrin-IX biosynthesis; 5-aminolevulinate from L-glutamyl-tRNA(Glu): step 2/2. The protein is Glutamate-1-semialdehyde 2,1-aminomutase of Polynucleobacter necessarius subsp. necessarius (strain STIR1).